Reading from the N-terminus, the 60-residue chain is Large ribosomal subunit protein uL30 (60 aa).

It belongs to the universal ribosomal protein uL30 family. As to quaternary structure, part of the 50S ribosomal subunit.

This Kineococcus radiotolerans (strain ATCC BAA-149 / DSM 14245 / SRS30216) protein is Large ribosomal subunit protein uL30.